A 242-amino-acid chain; its full sequence is Universal stress protein PHOS32 (242 aa).

The N-terminal 43 residues, 1 to 43 (MNPADSDHPQLPNIKIHHPPSPRHSHHHHSSSTPSSAATPTPT), are a transit peptide targeting the chloroplast. The segment at 1–45 (MNPADSDHPQLPNIKIHHPPSPRHSHHHHSSSTPSSAATPTPTAG) is disordered. Basic residues predominate over residues 15-30 (KIHHPPSPRHSHHHHS). Pro-19 is a binding site for ATP. At Ser-21 the chain carries Phosphoserine; by MAPK3 and MAPK6. Over residues 31-44 (SSTPSSAATPTPTA) the composition is skewed to low complexity. ATP contacts are provided by residues Val-83, 168-178 (GSRGFGAEKKR), and 186-188 (SVS). Ser-219 carries the phosphoserine modification.

The protein belongs to the universal stress protein A family. In terms of processing, phosphorylated by MAPK3 and MAPK6 after pathogenic elicitation (e.g. bacterial flg22, Phytophthora infestans zoospores and xylanase).

It localises to the plastid. The protein resides in the chloroplast. This chain is Universal stress protein PHOS32, found in Arabidopsis thaliana (Mouse-ear cress).